A 665-amino-acid chain; its full sequence is Zinc finger CCCH domain-containing protein 45 (665 aa).

The segment at 1-55 (MDDGDLSFDFEGGLDQPPAGGGGGPAPHSSDPGGVGGGGGGGGPGDGGGHGRGRG) is disordered. Gly residues predominate over residues 33 to 50 (GGVGGGGGGGGPGDGGGH). 3 C3H1-type zinc fingers span residues 58–85 (SYRQ…HQFD), 86–113 (KARM…HSYD), and 114–139 (DVKE…HVKL). The segment at 167 to 256 (HNNYNQQGER…QATRIATPLP (90 aa)) is disordered. The segment covering 169–200 (NYNQQGERPQHPQGSGLPNQNSIDNTTTTTAQ) has biased composition (polar residues). Over residues 205–238 (QQAQTTNQQPPQQQQQQQQQQQQQQKPNTNDQVQ) the composition is skewed to low complexity. Polar residues predominate over residues 239 to 250 (SVPNGSSNQATR). Residues 260–395 (SRYFIVKSCN…FIGEQLASLL (136 aa)) enclose the YTH domain. The stretch at 432-459 (DIVLFDDNEEEEEEESEEEEEGNGQESQ) forms a coiled coil. The segment covering 439–454 (NEEEEEEESEEEEEGN) has biased composition (acidic residues). Disordered stretches follow at residues 439–469 (NEEE…GMMW) and 561–665 (GPLM…SRKR). Gly residues predominate over residues 561–573 (GPLMGGLGMGGPG). Basic and acidic residues predominate over residues 596–623 (TKREQRRPGGERGDRYETTSDQGSRGHD).

This Oryza sativa subsp. japonica (Rice) protein is Zinc finger CCCH domain-containing protein 45.